A 1086-amino-acid chain; its full sequence is MSTSSSNGLLLTSMSGRHDDMEAGSAKTEEHSDHEELQHDPDDPFDIDNTKNASVESLRRWRQAALVLNASRRFRYTLDLNKEEHYDNRRRMIRAHAQVIRAALLFKLAGEQQIAFGSSTPAASTGNFDIDLEKLVSMTRNQNMSNLQQYGGVKGVAEKLKSNMEQGINEDEKEVIDRKNAFGSNTYPKKKGKNFFMFLWEAWQDLTLIILIIAAVTSLALGIKTEGLKEGWLDGGSIAFAVLLVIVVTAVSDYRQSLQFQNLNDEKRNIQLEVMRGGRTVKISIYDVVVGDVIPLRIGDQVPADGVLISGHSLAIDESSMTGESKIVHKDQKSPFLMSGCKVADGVGNMLVTGVGINTEWGLLMASISEDTGEETPLQVRLNGLATFIGIVGLSVALVVLVALLVRYFTGTTQDTNGATQFIKGTTSISDIVDDCVKIFTIAVTIVVVAVPEGLPLAVTLTLAYSMRKMMADKALVRRLSACETMGSATTICSDKTGTLTLNQMTVVETYAGGSKMDVADNPSGLHPKLVALISEGVAQNTTGNIFHPKDGGEVEISGSPTEKAILSWAYKLGMKFDTIRSESAIIHAFPFNSEKKRGGVAVLRGDSEVFIHWKGAAEIVLACCTQYMDSNGTLQSIESQKEFFRVAIDSMAKNSLRCVAIACRTQELNQVPKEQEDLDKWALPEDELILLAIVGIKDPCRPGVREAVRICTSAGVKVRMVTGDNLQTAKAIALECGILSSDTEAVEPTIIEGKVFRELSEKEREQVAKKITVMGRSSPNDKLLLVQALRKNGDVVAVTGDGTNDAPALHEADIGLSMGISGTEVAKESSDIIILDDNFASVVKVVRWGRSVYANIQKFIQFQLTVNVAALIINVVAAMSSGDVPLKAVQLLWVNLIMDTLGALALATEPPTDHLMHRTPVGRREPLITNIMWRNLLVQSFYQVAVLLVLNFAGLSILGLNHENHAHAVEVKNTMIFNAFVMCQIFNEFNARKPDEMNVFRGVNKNPLFVAIVGVTFILQIIIVTFLGKFAHTVRLGWQLWLASIIIGLVSWPLAIVGKLIPVPKTPMSVYFKKPFRKYKASRNA.

Low complexity predominate over residues 1–15 (MSTSSSNGLLLTSMS). A disordered region spans residues 1–50 (MSTSSSNGLLLTSMSGRHDDMEAGSAKTEEHSDHEELQHDPDDPFDIDNT). At 1-194 (MSTSSSNGLL…NTYPKKKGKN (194 aa)) the chain is on the cytoplasmic side. Positions 16–42 (GRHDDMEAGSAKTEEHSDHEELQHDPD) are enriched in basic and acidic residues. Residues 57 to 68 (SLRRWRQAALVL) are interaction with calmodulin. The chain crosses the membrane as a helical span at residues 195-215 (FFMFLWEAWQDLTLIILIIAA). Residues 216–233 (VTSLALGIKTEGLKEGWL) are Lumenal-facing. Residues 234–254 (DGGSIAFAVLLVIVVTAVSDY) form a helical membrane-spanning segment. Residues 255 to 382 (RQSLQFQNLN…GEETPLQVRL (128 aa)) lie on the Cytoplasmic side of the membrane. Residues 383–402 (NGLATFIGIVGLSVALVVLV) form a helical membrane-spanning segment. Residues 403 to 439 (ALLVRYFTGTTQDTNGATQFIKGTTSISDIVDDCVKI) are Lumenal-facing. The helical transmembrane segment at 440 to 457 (FTIAVTIVVVAVPEGLPL) threads the bilayer. The Cytoplasmic segment spans residues 458 to 857 (AVTLTLAYSM…RWGRSVYANI (400 aa)). D495 functions as the 4-aspartylphosphate intermediate in the catalytic mechanism. Residues D802 and D806 each coordinate Mg(2+). Residues 858–876 (QKFIQFQLTVNVAALIINV) traverse the membrane as a helical segment. The Lumenal portion of the chain corresponds to 877–887 (VAAMSSGDVPL). A helical transmembrane segment spans residues 888 to 908 (KAVQLLWVNLIMDTLGALALA). The Cytoplasmic segment spans residues 909–928 (TEPPTDHLMHRTPVGRREPL). The chain crosses the membrane as a helical span at residues 929 to 951 (ITNIMWRNLLVQSFYQVAVLLVL). Over 952 to 963 (NFAGLSILGLNH) the chain is Lumenal. Residues 964–988 (ENHAHAVEVKNTMIFNAFVMCQIFN) form a helical membrane-spanning segment. The Cytoplasmic segment spans residues 989–1006 (EFNARKPDEMNVFRGVNK). A helical membrane pass occupies residues 1007–1028 (NPLFVAIVGVTFILQIIIVTFL). At 1029 to 1038 (GKFAHTVRLG) the chain is on the lumenal side. A helical transmembrane segment spans residues 1039-1060 (WQLWLASIIIGLVSWPLAIVGK). Residues 1061–1086 (LIPVPKTPMSVYFKKPFRKYKASRNA) lie on the Cytoplasmic side of the membrane.

The protein belongs to the cation transport ATPase (P-type) (TC 3.A.3) family. Type IIB subfamily.

Its subcellular location is the membrane. The enzyme catalyses Ca(2+)(in) + ATP + H2O = Ca(2+)(out) + ADP + phosphate + H(+). With respect to regulation, activated by calmodulin. This magnesium-dependent enzyme catalyzes the hydrolysis of ATP coupled with the translocation of calcium from the cytosol out of the cell or into organelles. The sequence is that of Calcium-transporting ATPase 9, plasma membrane-type (ACA9) from Arabidopsis thaliana (Mouse-ear cress).